The chain runs to 452 residues: Scaffold protein ILK (452 aa).

Met-1 is modified (N-acetylmethionine). ANK repeat units follow at residues 2–30, 31–63, 64–96, 97–129, and 130–174; these read DDIF…LNQG, DDHG…INVM, NRGD…INAV, NEHG…VSIC, and NKYG…GTTR. The interval 33 to 139 is interaction with LIMS1; the sequence is HGFSPLHWAC…NKYGEMPVDK (107 aa). Thr-173 is modified (phosphothreonine; by PAK1). The PH-like; mediates interaction with TGFB1I1 stretch occupies residues 180-212; sequence GTLNKHSGIDFKQLNFLTKLNENHSGELWKGRW. Phosphoserine is present on Ser-186. One can recognise a Protein kinase domain in the interval 193–446; sequence LNFLTKLNEN…PKFDMIVPIL (254 aa). Positions 200, 202, 203, 204, and 220 each coordinate ATP. Residue Ser-246 is modified to Phosphoserine; by PAK1. ATP is bound by residues His-270, Met-272, and Asn-279. Residue Asp-339 coordinates Mg(2+). Position 341 (Lys-341) interacts with ATP. Residues 363-371 carry the Nuclear localization signal motif; the sequence is KKPEDTNRR. Lys-426 is subject to N6-acetyllysine.

Belongs to the protein kinase superfamily. TKL Ser/Thr protein kinase family. Component of the heterotrimeric IPP (ILK-PINCH-PARVIN) complex composed of ILK, LIMS1/PINCH and PARVA; the complex binds to F-actin via the C-terminal tail of LIMS1 and the N-terminal region of PARVA, promoting F-actin filament bundling. Formation of the IPP complex is dependent on protein kinase C and precedes integrin-mediated cell adhesion and spreading. ILK also interacts with LIMS2/PINCH2 and with PARVB and PARVG which may substitute for LIMS1 and PARVA in the IPP complex; PARVA and PARVB compete for the same binding site. Interaction with PARVG promotes the establishment of cell polarity required for leukocyte migration. Interacts with the cytoplasmic domain of integrin ITGB1 and may also interact with integrins ITGB2, ITGB3 and/or ITGB5. Interacts probably also with TGFB1I1. Interacts (via ANK repeats) with EPHA1 (via SAM domain); stimulated by EFNA1 but independent of the kinase activity of EPHA1. Interacts with FERMT2. Interacts with LIMD2; leading to activate the protein kinase activity. Interacts with PXN/PAXILLIN (via LD motif 4). Interacts with CCDC25 (via cytoplasmic region); initiating the ILK-PARVB cascade to induce cytoskeleton rearrangement and directional migration of cells. Interacts with IQGAP1; the interaction is required for localization of IQGAP1 to the cell cortex. Post-translationally, phosphorylation by PAK1 modulates ILK subcellular location by promoting its nuclear export. Highly expressed in heart followed by skeletal muscle, pancreas and kidney. Weakly expressed in placenta, lung and liver.

Its subcellular location is the cell junction. The protein localises to the focal adhesion. It localises to the cell membrane. The protein resides in the cell projection. It is found in the lamellipodium. Its subcellular location is the cytoplasm. The protein localises to the myofibril. It localises to the sarcomere. The protein resides in the nucleus. It is found in the cytoskeleton. Its subcellular location is the microtubule organizing center. The protein localises to the centrosome. It localises to the cell cortex. In terms of biological role, scaffold protein which mediates protein-protein interactions during a range of cellular events including focal adhesion assembly, cell adhesion and cell migration. Regulates integrin-mediated signal transduction by contributing to inside-out integrin activation. Recruits PARVA and LIMS1/PITCH to form the heterotrimeric IPP (ILK-PINCH-PARVIN) complex which binds to F-actin via the C-terminal tail of LIMS1 and the N-terminal region of PARVA, promoting F-actin filament bundling, a process required to generate force for actin cytoskeleton reorganization and subsequent dynamic cell adhesion events such as cell spreading and migration. Binding to PARVA promotes effective assembly of ILK into focal adhesions while PARVA-bound ILK can simultaneously engage integrin-beta cytoplasmic tails to mediate cell adhesion. Plays a role with PARVG in promoting the cell adhesion and spreading of leukocytes. Acts as an upstream effector of both AKT1/PKB and GSK3. Mediates trafficking of caveolae to the cell surface in an ITGB1-dependent manner by promoting the recruitment of IQGAP1 to the cell cortex which cooperates with its effector DIAPH1 to locally stabilize microtubules and allow stable insertion of caveolae into the plasma membrane. Required for the maintenance of mitotic spindle integrity by promoting phosphorylation of TACC3 by AURKA. Associates with chromatin and may act as a negative regulator of transcription when located in the nucleus. This chain is Scaffold protein ILK, found in Homo sapiens (Human).